Here is a 160-residue protein sequence, read N- to C-terminus: Allophycocyanin alpha chain (160 aa).

Asn-70 carries the post-translational modification N4-methylasparagine. Cys-80 serves as a coordination point for (2R,3E)-phycocyanobilin.

The protein belongs to the phycobiliprotein family. Component of the phycobilisome. Heterodimer of an alpha and a beta chain. Post-translationally, contains one covalently linked phycocyanobilin chromophore.

Its subcellular location is the cellular thylakoid membrane. Light-harvesting photosynthetic bile pigment-protein from the phycobiliprotein complex. Allophycocyanin has a maximum absorption at approximately 650 nanometers. The protein is Allophycocyanin alpha chain (apcA) of Mastigocladus laminosus (Fischerella sp.).